A 627-amino-acid polypeptide reads, in one-letter code: DNA topoisomerase 4 subunit B (627 aa).

Residues Tyr4, Asn41, Asp68, 109–115, and Lys333 each bind ATP; that span reads GLHGVGV. The 114-residue stretch at 412–525 folds into the Toprim domain; it reads TELFIVEGDS…NGHIYIAQPP (114 aa). Residues Glu418, Asp490, and Asp492 each contribute to the Mg(2+) site.

Belongs to the type II topoisomerase family. ParE type 1 subfamily. In terms of assembly, heterotetramer composed of ParC and ParE. Mg(2+) is required as a cofactor. The cofactor is Mn(2+). Ca(2+) serves as cofactor.

The enzyme catalyses ATP-dependent breakage, passage and rejoining of double-stranded DNA.. Pyrrolopyrimidines inhibit both GyrB and its paralog in topoisomerase IV (parE). Its function is as follows. Topoisomerase IV is essential for chromosome segregation. It relaxes supercoiled DNA. Performs the decatenation events required during the replication of a circular DNA molecule. This chain is DNA topoisomerase 4 subunit B, found in Francisella tularensis subsp. holarctica (strain LVS).